Here is a 328-residue protein sequence, read N- to C-terminus: Beta-ribofuranosylphenol 5'-phosphate synthase (328 aa).

The protein belongs to the beta-RFA-P synthase family. In terms of assembly, homodimer. It depends on Mg(2+) as a cofactor.

The enzyme catalyses 5-phospho-alpha-D-ribose 1-diphosphate + 4-hydroxybenzoate + H(+) = 4-(beta-D-ribofuranosyl)phenol 5'-phosphate + CO2 + diphosphate. It carries out the reaction 4-aminobenzoate + 5-phospho-alpha-D-ribose 1-diphosphate + H(+) = 4-(beta-D-ribofuranosyl)aminobenzene 5'-phosphate + CO2 + diphosphate. It participates in cofactor biosynthesis; 5,6,7,8-tetrahydromethanopterin biosynthesis. In terms of biological role, catalyzes the condensation of 4-hydroxybenzoate (HB) with 5-phospho-alpha-D-ribose 1-diphosphate (PRPP) to produce beta-ribofuranosylphenol 5'-phosphate (beta-RFH-P). Also catalyzes the condensation of 4-aminobenzoate (pABA) with PRPP to produce beta-ribofuranosylaminobenzene 5'-phosphate (beta-RFA-P). Only 4-hydroxybenzoate is known to be biosynthesized by methanogenic archaea, but 4-aminobenzoate can be used as substrate by growing methanogens when it is present in the growth medium. This chain is Beta-ribofuranosylphenol 5'-phosphate synthase, found in Methanocaldococcus jannaschii (strain ATCC 43067 / DSM 2661 / JAL-1 / JCM 10045 / NBRC 100440) (Methanococcus jannaschii).